The following is a 383-amino-acid chain: Bifunctional enzyme IspD/IspF (383 aa).

Residues 1–226 form a 2-C-methyl-D-erythritol 4-phosphate cytidylyltransferase region; it reads MKIAAVIVAA…ERQIMSETIT (226 aa). Residues 227-383 form a 2-C-methyl-D-erythritol 2,4-cyclodiphosphate synthase region; that stretch reads VTGQGYDVHR…QAIVTARLTT (157 aa). Asp233 and His235 together coordinate a divalent metal cation. 4-CDP-2-C-methyl-D-erythritol 2-phosphate is bound by residues 233–235 and 259–260; these read DVH and HS. Residue His267 coordinates a divalent metal cation. 4-CDP-2-C-methyl-D-erythritol 2-phosphate contacts are provided by residues 281-283, 357-360, Phe364, and Arg367; these read DIG and TTTE.

The protein in the N-terminal section; belongs to the IspD/TarI cytidylyltransferase family. IspD subfamily. It in the C-terminal section; belongs to the IspF family. Requires a divalent metal cation as cofactor.

It carries out the reaction 2-C-methyl-D-erythritol 4-phosphate + CTP + H(+) = 4-CDP-2-C-methyl-D-erythritol + diphosphate. It catalyses the reaction 4-CDP-2-C-methyl-D-erythritol 2-phosphate = 2-C-methyl-D-erythritol 2,4-cyclic diphosphate + CMP. The protein operates within isoprenoid biosynthesis; isopentenyl diphosphate biosynthesis via DXP pathway; isopentenyl diphosphate from 1-deoxy-D-xylulose 5-phosphate: step 2/6. Its pathway is isoprenoid biosynthesis; isopentenyl diphosphate biosynthesis via DXP pathway; isopentenyl diphosphate from 1-deoxy-D-xylulose 5-phosphate: step 4/6. Its function is as follows. Bifunctional enzyme that catalyzes the formation of 4-diphosphocytidyl-2-C-methyl-D-erythritol from CTP and 2-C-methyl-D-erythritol 4-phosphate (MEP) (IspD), and catalyzes the conversion of 4-diphosphocytidyl-2-C-methyl-D-erythritol 2-phosphate (CDP-ME2P) to 2-C-methyl-D-erythritol 2,4-cyclodiphosphate (ME-CPP) with a corresponding release of cytidine 5-monophosphate (CMP) (IspF). In Maricaulis maris (strain MCS10) (Caulobacter maris), this protein is Bifunctional enzyme IspD/IspF.